Consider the following 53-residue polypeptide: Small ribosomal subunit protein uS14 (53 aa).

The Zn(2+) site is built by Cys-17, Cys-20, Cys-36, and Cys-39.

It belongs to the universal ribosomal protein uS14 family. Zinc-binding uS14 subfamily. Part of the 30S ribosomal subunit. The cofactor is Zn(2+).

Binds 16S rRNA, required for the assembly of 30S particles. In Methanococcus maripaludis (strain DSM 14266 / JCM 13030 / NBRC 101832 / S2 / LL), this protein is Small ribosomal subunit protein uS14.